The following is a 284-amino-acid chain: 4-diphosphocytidyl-2-C-methyl-D-erythritol kinase (284 aa).

K14 is a catalytic residue. 98 to 108 (PMGGGLGGGSS) contributes to the ATP binding site. D140 is an active-site residue.

It belongs to the GHMP kinase family. IspE subfamily.

It carries out the reaction 4-CDP-2-C-methyl-D-erythritol + ATP = 4-CDP-2-C-methyl-D-erythritol 2-phosphate + ADP + H(+). It functions in the pathway isoprenoid biosynthesis; isopentenyl diphosphate biosynthesis via DXP pathway; isopentenyl diphosphate from 1-deoxy-D-xylulose 5-phosphate: step 3/6. Functionally, catalyzes the phosphorylation of the position 2 hydroxy group of 4-diphosphocytidyl-2C-methyl-D-erythritol. The protein is 4-diphosphocytidyl-2-C-methyl-D-erythritol kinase of Shewanella baltica (strain OS185).